A 618-amino-acid polypeptide reads, in one-letter code: Proline--tRNA ligase (618 aa).

The protein belongs to the class-II aminoacyl-tRNA synthetase family. ProS type 1 subfamily. As to quaternary structure, homodimer.

The protein localises to the cytoplasm. The catalysed reaction is tRNA(Pro) + L-proline + ATP = L-prolyl-tRNA(Pro) + AMP + diphosphate. Functionally, catalyzes the attachment of proline to tRNA(Pro) in a two-step reaction: proline is first activated by ATP to form Pro-AMP and then transferred to the acceptor end of tRNA(Pro). As ProRS can inadvertently accommodate and process non-cognate amino acids such as alanine and cysteine, to avoid such errors it has two additional distinct editing activities against alanine. One activity is designated as 'pretransfer' editing and involves the tRNA(Pro)-independent hydrolysis of activated Ala-AMP. The other activity is designated 'posttransfer' editing and involves deacylation of mischarged Ala-tRNA(Pro). The misacylated Cys-tRNA(Pro) is not edited by ProRS. This Streptococcus pyogenes serotype M3 (strain ATCC BAA-595 / MGAS315) protein is Proline--tRNA ligase.